The sequence spans 203 residues: High frequency lysogenization protein HflD homolog (203 aa).

The protein belongs to the HflD family.

The protein localises to the cytoplasm. The protein resides in the cell inner membrane. This Pasteurella multocida (strain Pm70) protein is High frequency lysogenization protein HflD homolog.